The chain runs to 337 residues: tRNA N6-adenosine threonylcarbamoyltransferase (337 aa).

Residues histidine 111 and histidine 115 each coordinate Fe cation. Residues 134–138 (LVSGG), aspartate 167, glycine 180, and asparagine 272 each bind substrate. Aspartate 300 is a Fe cation binding site.

This sequence belongs to the KAE1 / TsaD family. The cofactor is Fe(2+).

Its subcellular location is the cytoplasm. The catalysed reaction is L-threonylcarbamoyladenylate + adenosine(37) in tRNA = N(6)-L-threonylcarbamoyladenosine(37) in tRNA + AMP + H(+). Required for the formation of a threonylcarbamoyl group on adenosine at position 37 (t(6)A37) in tRNAs that read codons beginning with adenine. Is involved in the transfer of the threonylcarbamoyl moiety of threonylcarbamoyl-AMP (TC-AMP) to the N6 group of A37, together with TsaE and TsaB. TsaD likely plays a direct catalytic role in this reaction. This Cronobacter sakazakii (strain ATCC BAA-894) (Enterobacter sakazakii) protein is tRNA N6-adenosine threonylcarbamoyltransferase.